Reading from the N-terminus, the 295-residue chain is Shikimate dehydrogenase (NADP(+)) (295 aa).

Residues 20-22 and threonine 68 contribute to the shikimate site; that span reads SWS. Lysine 72 (proton acceptor) is an active-site residue. Shikimate contacts are provided by asparagine 93 and aspartate 108. Residues 132-136 and methionine 234 contribute to the NADP(+) site; that span reads GNGGA. Tyrosine 236 is a binding site for shikimate. Glycine 257 contacts NADP(+).

This sequence belongs to the shikimate dehydrogenase family. Homodimer.

The catalysed reaction is shikimate + NADP(+) = 3-dehydroshikimate + NADPH + H(+). It participates in metabolic intermediate biosynthesis; chorismate biosynthesis; chorismate from D-erythrose 4-phosphate and phosphoenolpyruvate: step 4/7. In terms of biological role, involved in the biosynthesis of the chorismate, which leads to the biosynthesis of aromatic amino acids. Catalyzes the reversible NADPH linked reduction of 3-dehydroshikimate (DHSA) to yield shikimate (SA). This chain is Shikimate dehydrogenase (NADP(+)), found in Chlorobaculum tepidum (strain ATCC 49652 / DSM 12025 / NBRC 103806 / TLS) (Chlorobium tepidum).